Reading from the N-terminus, the 761-residue chain is Phosphoribosylformylglycinamidine synthase subunit PurL (761 aa).

The segment covering Met-1–Pro-16 has biased composition (low complexity). Residues Met-1–Tyr-21 form a disordered region. His-57 is an active-site residue. Tyr-60 and Lys-101 together coordinate ATP. Position 103 (Glu-103) interacts with Mg(2+). Substrate contacts are provided by residues Ser-104–His-107 and Arg-126. Catalysis depends on His-105, which acts as the Proton acceptor. Asp-127 contacts Mg(2+). Gln-252 is a substrate binding site. Mg(2+) is bound at residue Asp-280. Glu-329 to Gln-331 is a substrate binding site. Asn-519 and Gly-556 together coordinate ATP. Asn-557 contacts Mg(2+). Ser-559 contributes to the substrate binding site.

The protein belongs to the FGAMS family. As to quaternary structure, monomer. Part of the FGAM synthase complex composed of 1 PurL, 1 PurQ and 2 PurS subunits.

It is found in the cytoplasm. It catalyses the reaction N(2)-formyl-N(1)-(5-phospho-beta-D-ribosyl)glycinamide + L-glutamine + ATP + H2O = 2-formamido-N(1)-(5-O-phospho-beta-D-ribosyl)acetamidine + L-glutamate + ADP + phosphate + H(+). The protein operates within purine metabolism; IMP biosynthesis via de novo pathway; 5-amino-1-(5-phospho-D-ribosyl)imidazole from N(2)-formyl-N(1)-(5-phospho-D-ribosyl)glycinamide: step 1/2. Its function is as follows. Part of the phosphoribosylformylglycinamidine synthase complex involved in the purines biosynthetic pathway. Catalyzes the ATP-dependent conversion of formylglycinamide ribonucleotide (FGAR) and glutamine to yield formylglycinamidine ribonucleotide (FGAM) and glutamate. The FGAM synthase complex is composed of three subunits. PurQ produces an ammonia molecule by converting glutamine to glutamate. PurL transfers the ammonia molecule to FGAR to form FGAM in an ATP-dependent manner. PurS interacts with PurQ and PurL and is thought to assist in the transfer of the ammonia molecule from PurQ to PurL. This is Phosphoribosylformylglycinamidine synthase subunit PurL from Frankia casuarinae (strain DSM 45818 / CECT 9043 / HFP020203 / CcI3).